The chain runs to 301 residues: Probable aspartoacylase (301 aa).

Positions 13 and 16 each coordinate Zn(2+). Substrate is bound by residues Arg54 and 61–62; that span reads NR. Residue His105 coordinates Zn(2+). Positions 163 and 273 each coordinate substrate.

The protein belongs to the AspA/AstE family. Aspartoacylase subfamily. Requires Zn(2+) as cofactor.

It carries out the reaction an N-acyl-L-aspartate + H2O = a carboxylate + L-aspartate. The sequence is that of Probable aspartoacylase from Prochlorococcus marinus (strain MIT 9312).